Consider the following 477-residue polypeptide: Glycogen synthase (477 aa).

Lysine 15 lines the ADP-alpha-D-glucose pocket.

It belongs to the glycosyltransferase 1 family. Bacterial/plant glycogen synthase subfamily.

It carries out the reaction [(1-&gt;4)-alpha-D-glucosyl](n) + ADP-alpha-D-glucose = [(1-&gt;4)-alpha-D-glucosyl](n+1) + ADP + H(+). It functions in the pathway glycan biosynthesis; glycogen biosynthesis. Functionally, synthesizes alpha-1,4-glucan chains using ADP-glucose. This is Glycogen synthase from Mannheimia succiniciproducens (strain KCTC 0769BP / MBEL55E).